The chain runs to 281 residues: 40S small subunit processome assembly factor 1 (281 aa).

Residues 29-141 are disordered; it reads LGETEGETEQ…DEDEPAKNKT (113 aa). Phosphoserine occurs at positions 67 and 75. Residue K172 is modified to N6-acetyllysine. The disordered stretch occupies residues 221-254; that stretch reads ETDIFKKKKKKGRGQEDRRSKKSAPSILSSGQVG. S267 bears the Phosphoserine mark.

As to quaternary structure, part of the small subunit (SSU) processome, composed of more than 70 proteins and the RNA chaperone small nucleolar RNA (snoRNA) U3.

The protein localises to the chromosome. Its subcellular location is the nucleus. It localises to the nucleolus. In terms of biological role, part of the small subunit (SSU) processome, first precursor of the small eukaryotic ribosomal subunit. During the assembly of the SSU processome in the nucleolus, many ribosome biogenesis factors, an RNA chaperone and ribosomal proteins associate with the nascent pre-rRNA and work in concert to generate RNA folding, modifications, rearrangements and cleavage as well as targeted degradation of pre-ribosomal RNA by the RNA exosome. Prevents helicase DHX37 to be recruited before post-A1 state. The chain is 40S small subunit processome assembly factor 1 from Mus musculus (Mouse).